Here is a 376-residue protein sequence, read N- to C-terminus: Phosphoserine aminotransferase (376 aa).

An L-glutamate-binding site is contributed by arginine 54. Pyridoxal 5'-phosphate contacts are provided by residues 88-89, tryptophan 115, threonine 165, aspartate 186, and glutamine 209; that span reads AT. Lysine 210 carries the N6-(pyridoxal phosphate)lysine modification. 251–252 serves as a coordination point for pyridoxal 5'-phosphate; it reads NT.

The protein belongs to the class-V pyridoxal-phosphate-dependent aminotransferase family. SerC subfamily. As to quaternary structure, homodimer. The cofactor is pyridoxal 5'-phosphate.

The protein resides in the cytoplasm. The catalysed reaction is O-phospho-L-serine + 2-oxoglutarate = 3-phosphooxypyruvate + L-glutamate. It catalyses the reaction 4-(phosphooxy)-L-threonine + 2-oxoglutarate = (R)-3-hydroxy-2-oxo-4-phosphooxybutanoate + L-glutamate. Its pathway is amino-acid biosynthesis; L-serine biosynthesis; L-serine from 3-phospho-D-glycerate: step 2/3. It functions in the pathway cofactor biosynthesis; pyridoxine 5'-phosphate biosynthesis; pyridoxine 5'-phosphate from D-erythrose 4-phosphate: step 3/5. Its function is as follows. Catalyzes the reversible conversion of 3-phosphohydroxypyruvate to phosphoserine and of 3-hydroxy-2-oxo-4-phosphonooxybutanoate to phosphohydroxythreonine. This Rhodopirellula baltica (strain DSM 10527 / NCIMB 13988 / SH1) protein is Phosphoserine aminotransferase.